Here is a 55-residue protein sequence, read N- to C-terminus: Large ribosomal subunit protein bL33 (55 aa).

It belongs to the bacterial ribosomal protein bL33 family.

The polypeptide is Large ribosomal subunit protein bL33 (Sphingopyxis alaskensis (strain DSM 13593 / LMG 18877 / RB2256) (Sphingomonas alaskensis)).